We begin with the raw amino-acid sequence, 86 residues long: Protein Tat (86 aa).

The tract at residues 1-24 (MEPVDPRLEPWKHPGSQPKTACTN) is interaction with human CREBBP. Positions 1-48 (MEPVDPRLEPWKHPGSQPKTACTNCYCKKCCFHCQVCFITKALGISYG) are transactivation. Positions 22, 25, and 27 each coordinate Zn(2+). Residues 22–37 (CTNCYCKKCCFHCQVC) are cysteine-rich. Lys28 is modified (N6-acetyllysine; by host PCAF). Zn(2+)-binding residues include Cys30, His33, Cys34, and Cys37. A core region spans residues 38–48 (FITKALGISYG). Residues 48 to 58 (GRKKRRQRRRP) are compositionally biased toward basic residues. The segment at 48–86 (GRKKRRQRRRPPQGSQTHQVSLSKQPTSQSRGDPTGPKE) is disordered. Residues 49–57 (RKKRRQRRR) carry the Nuclear localization signal, RNA-binding (TAR), and protein transduction motif. The interaction with the host capping enzyme RNGTT stretch occupies residues 49 to 86 (RKKRRQRRRPPQGSQTHQVSLSKQPTSQSRGDPTGPKE). Residues Lys50 and Lys51 each carry the N6-acetyllysine; by host EP300 and GCN5L2 modification. An asymmetric dimethylarginine; by host PRMT6 mark is found at Arg52 and Arg53. Over residues 62-79 (SQTHQVSLSKQPTSQSRG) the composition is skewed to polar residues. Lys71 participates in a covalent cross-link: Glycyl lysine isopeptide (Lys-Gly) (interchain with G-Cter in ubiquitin). A Cell attachment site motif is present at residues 78–80 (RGD).

This sequence belongs to the lentiviruses Tat family. In terms of assembly, interacts with host CCNT1. Associates with the P-TEFb complex composed at least of Tat, P-TEFb (CDK9 and CCNT1), TAR RNA, RNA Pol II. Recruits the HATs CREBBP, TAF1/TFIID, EP300, PCAF and GCN5L2. Interacts with host KAT5/Tip60; this interaction targets the latter to degradation. Interacts with the host deacetylase SIRT1. Interacts with host capping enzyme RNGTT; this interaction stimulates RNGTT. Binds to host KDR, and to the host integrins ITGAV/ITGB3 and ITGA5/ITGB1. Interacts with host KPNB1/importin beta-1 without previous binding to KPNA1/importin alpha-1. Interacts with EIF2AK2. Interacts with host nucleosome assembly protein NAP1L1; this interaction may be required for the transport of Tat within the nucleus, since the two proteins interact at the nuclear rim. Interacts with host C1QBP/SF2P32; this interaction involves lysine-acetylated Tat. Interacts with the host chemokine receptors CCR2, CCR3 and CXCR4. Interacts with host DPP4/CD26; this interaction may trigger an anti-proliferative effect. Interacts with host LDLR. Interacts with the host extracellular matrix metalloproteinase MMP1. Interacts with host PRMT6; this interaction mediates Tat's methylation. Interacts with, and is ubiquitinated by MDM2/Hdm2. Interacts with host PSMC3 and HTATIP2. Interacts with STAB1; this interaction may overcome SATB1-mediated repression of IL2 and IL2RA (interleukin) in T cells by binding to the same domain than HDAC1. Interacts (when acetylated) with human CDK13, thereby increasing HIV-1 mRNA splicing and promoting the production of the doubly spliced HIV-1 protein Nef. Interacts with host TBP; this interaction modulates the activity of transcriptional pre-initiation complex. Interacts with host RELA. Interacts with host PLSCR1; this interaction negatively regulates Tat transactivation activity by altering its subcellular distribution. In terms of processing, asymmetrical arginine methylation by host PRMT6 seems to diminish the transactivation capacity of Tat and affects the interaction with host CCNT1. Post-translationally, acetylation by EP300, CREBBP, GCN5L2/GCN5 and PCAF regulates the transactivation activity of Tat. EP300-mediated acetylation of Lys-50 promotes dissociation of Tat from the TAR RNA through the competitive binding to PCAF's bromodomain. In addition, the non-acetylated Tat's N-terminus can also interact with PCAF. PCAF-mediated acetylation of Lys-28 enhances Tat's binding to CCNT1. Lys-50 is deacetylated by SIRT1. Polyubiquitination by host MDM2 does not target Tat to degradation, but activates its transactivation function and fosters interaction with CCNT1 and TAR RNA. In terms of processing, phosphorylated by EIF2AK2 on serine and threonine residues adjacent to the basic region important for TAR RNA binding and function. Phosphorylation of Tat by EIF2AK2 is dependent on the prior activation of EIF2AK2 by dsRNA.

Its subcellular location is the host nucleus. The protein localises to the host nucleolus. It is found in the host cytoplasm. The protein resides in the secreted. Its function is as follows. Transcriptional activator that increases RNA Pol II processivity, thereby increasing the level of full-length viral transcripts. Recognizes a hairpin structure at the 5'-LTR of the nascent viral mRNAs referred to as the transactivation responsive RNA element (TAR) and recruits the cyclin T1-CDK9 complex (P-TEFb complex) that will in turn hyperphosphorylate the RNA polymerase II to allow efficient elongation. The CDK9 component of P-TEFb and other Tat-activated kinases hyperphosphorylate the C-terminus of RNA Pol II that becomes stabilized and much more processive. Other factors such as HTATSF1/Tat-SF1, SUPT5H/SPT5, and HTATIP2 are also important for Tat's function. Besides its effect on RNA Pol II processivity, Tat induces chromatin remodeling of proviral genes by recruiting the histone acetyltransferases (HATs) CREBBP, EP300 and PCAF to the chromatin. This also contributes to the increase in proviral transcription rate, especially when the provirus integrates in transcriptionally silent region of the host genome. To ensure maximal activation of the LTR, Tat mediates nuclear translocation of NF-kappa-B by interacting with host RELA. Through its interaction with host TBP, Tat may also modulate transcription initiation. Tat can reactivate a latently infected cell by penetrating in it and transactivating its LTR promoter. In the cytoplasm, Tat is thought to act as a translational activator of HIV-1 mRNAs. Functionally, extracellular circulating Tat can be endocytosed by surrounding uninfected cells via the binding to several surface receptors such as CD26, CXCR4, heparan sulfate proteoglycans (HSPG) or LDLR. Neurons are rarely infected, but they internalize Tat via their LDLR. Through its interaction with nuclear HATs, Tat is potentially able to control the acetylation-dependent cellular gene expression. Modulates the expression of many cellular genes involved in cell survival, proliferation or in coding for cytokines or cytokine receptors. Tat plays a role in T-cell and neurons apoptosis. Tat induced neurotoxicity and apoptosis probably contribute to neuroAIDS. Circulating Tat also acts as a chemokine-like and/or growth factor-like molecule that binds to specific receptors on the surface of the cells, affecting many cellular pathways. In the vascular system, Tat binds to ITGAV/ITGB3 and ITGA5/ITGB1 integrins dimers at the surface of endothelial cells and competes with bFGF for heparin-binding sites, leading to an excess of soluble bFGF. The polypeptide is Protein Tat (Homo sapiens (Human)).